The following is a 157-amino-acid chain: Putative gamma-glutamylcyclotransferase CG2811 (157 aa).

Residue 14 to 17 (YGTL) participates in substrate binding. Glu89 serves as the catalytic Proton acceptor.

The protein belongs to the gamma-glutamylcyclotransferase family.

Functionally, putative gamma-glutamylcyclotransferase. The chain is Putative gamma-glutamylcyclotransferase CG2811 from Drosophila melanogaster (Fruit fly).